A 160-amino-acid chain; its full sequence is Deoxyuridine 5'-triphosphate nucleotidohydrolase (160 aa).

Residues 79–81 (RSG), N92, 96–98 (TVD), and K106 contribute to the substrate site.

It belongs to the dUTPase family. Mg(2+) serves as cofactor.

The catalysed reaction is dUTP + H2O = dUMP + diphosphate + H(+). The protein operates within pyrimidine metabolism; dUMP biosynthesis; dUMP from dCTP (dUTP route): step 2/2. Its function is as follows. This enzyme is involved in nucleotide metabolism: it produces dUMP, the immediate precursor of thymidine nucleotides and it decreases the intracellular concentration of dUTP so that uracil cannot be incorporated into DNA. The polypeptide is Deoxyuridine 5'-triphosphate nucleotidohydrolase (Rhizobium meliloti (strain 1021) (Ensifer meliloti)).